The primary structure comprises 300 residues: 4-hydroxy-tetrahydrodipicolinate synthase (300 aa).

Pyruvate is bound at residue threonine 45. Catalysis depends on tyrosine 140, which acts as the Proton donor/acceptor. The active-site Schiff-base intermediate with substrate is lysine 169. Isoleucine 210 serves as a coordination point for pyruvate.

Belongs to the DapA family. In terms of assembly, homotetramer; dimer of dimers.

It is found in the cytoplasm. It carries out the reaction L-aspartate 4-semialdehyde + pyruvate = (2S,4S)-4-hydroxy-2,3,4,5-tetrahydrodipicolinate + H2O + H(+). The protein operates within amino-acid biosynthesis; L-lysine biosynthesis via DAP pathway; (S)-tetrahydrodipicolinate from L-aspartate: step 3/4. Catalyzes the condensation of (S)-aspartate-beta-semialdehyde [(S)-ASA] and pyruvate to 4-hydroxy-tetrahydrodipicolinate (HTPA). The chain is 4-hydroxy-tetrahydrodipicolinate synthase from Helicobacter pylori (strain Shi470).